A 368-amino-acid chain; its full sequence is Phospho-N-acetylmuramoyl-pentapeptide-transferase (368 aa).

Transmembrane regions (helical) follow at residues 23-43 (YLTF…IFAG), 72-92 (VPTM…FLWA), 98-118 (HVWL…IDDY), 139-159 (VTLG…SVLL), 170-190 (LSVD…TAVS), 201-221 (GLAA…AYLC), 238-258 (AGEV…FLWF), 281-301 (VIAL…VFFV), and 345-365 (KIVI…LMTL).

Belongs to the glycosyltransferase 4 family. MraY subfamily. Mg(2+) is required as a cofactor.

Its subcellular location is the cell inner membrane. The enzyme catalyses UDP-N-acetyl-alpha-D-muramoyl-L-alanyl-gamma-D-glutamyl-meso-2,6-diaminopimeloyl-D-alanyl-D-alanine + di-trans,octa-cis-undecaprenyl phosphate = di-trans,octa-cis-undecaprenyl diphospho-N-acetyl-alpha-D-muramoyl-L-alanyl-D-glutamyl-meso-2,6-diaminopimeloyl-D-alanyl-D-alanine + UMP. The protein operates within cell wall biogenesis; peptidoglycan biosynthesis. Functionally, catalyzes the initial step of the lipid cycle reactions in the biosynthesis of the cell wall peptidoglycan: transfers peptidoglycan precursor phospho-MurNAc-pentapeptide from UDP-MurNAc-pentapeptide onto the lipid carrier undecaprenyl phosphate, yielding undecaprenyl-pyrophosphoryl-MurNAc-pentapeptide, known as lipid I. The polypeptide is Phospho-N-acetylmuramoyl-pentapeptide-transferase (Chlorobaculum tepidum (strain ATCC 49652 / DSM 12025 / NBRC 103806 / TLS) (Chlorobium tepidum)).